Consider the following 583-residue polypeptide: Pre-mRNA-processing protein PRP40 (583 aa).

2 consecutive WW domains span residues Met1 to Glu31 and Glu42 to Phe72. FF domains are found at residues Lys132–Asn188, Thr201–Thr257, Gln262–Ile332, Arg354–Glu413, Gln427–Asn488, and Arg491–Glu552. Phosphothreonine is present on Thr576.

The protein belongs to the PRPF40 family. As to quaternary structure, interacts with CRM1, MSL5, PRP8, and the RNA polymerase II largest subunit (RPB1). MSL5, MUD2 and PRP40 interact to form the commitment complex 2 (CC2), a precursor of mature spliceosomes.

It localises to the nucleus. Required for pre-spliceosome formation, which is the first step of pre-mRNA splicing. This protein is associated with snRNP U1. Two commitment complexes, CC1 and CC2, have been defined in yeast. CC1 is a basal complex dependent only on the 5' splice site. CC2 is a complex of lower mobility and is dependent on a branchpoint as well as a 5' splice site region. This protein is involved in CC2 formation where it binds to the branchpoint binding protein MSL5, bridging the U1 snRNP-associated 5' splice site and the MSL5-associated branch point 3' intron splice site. This chain is Pre-mRNA-processing protein PRP40 (PRP40), found in Saccharomyces cerevisiae (strain ATCC 204508 / S288c) (Baker's yeast).